Reading from the N-terminus, the 456-residue chain is Cysteine--tRNA ligase (456 aa).

Residue C29 participates in Zn(2+) binding. Residues 31-41 (PTVYDYAHVGN) carry the 'HIGH' region motif. Residues C209, H234, and E238 each coordinate Zn(2+). Positions 267–271 (KMSKS) match the 'KMSKS' region motif. K270 serves as a coordination point for ATP.

It belongs to the class-I aminoacyl-tRNA synthetase family. Monomer. Zn(2+) is required as a cofactor.

The protein resides in the cytoplasm. It carries out the reaction tRNA(Cys) + L-cysteine + ATP = L-cysteinyl-tRNA(Cys) + AMP + diphosphate. This is Cysteine--tRNA ligase from Rhodospirillum centenum (strain ATCC 51521 / SW).